Reading from the N-terminus, the 960-residue chain is Phosphoenolpyruvate carboxylase 3 (960 aa).

Ser-8 is subject to Phosphoserine. Active-site residues include His-167 and Lys-597.

Belongs to the PEPCase type 1 family. Homotetramer. The cofactor is Mg(2+).

It localises to the cytoplasm. It carries out the reaction oxaloacetate + phosphate = phosphoenolpyruvate + hydrogencarbonate. It functions in the pathway photosynthesis; C4 acid pathway. Its activity is regulated as follows. By light-reversible phosphorylation. In terms of biological role, through the carboxylation of phosphoenolpyruvate (PEP) it forms oxaloacetate, a four-carbon dicarboxylic acid source for the tricarboxylic acid cycle. This Sorghum bicolor (Sorghum) protein is Phosphoenolpyruvate carboxylase 3.